The sequence spans 467 residues: Protection of telomeres protein 1a (467 aa).

The protein belongs to the telombin family. Component of the telomerase holoenzyme complex at least composed of TERT, CBF5 and POT1a. The RNA molecule associated to the telomerase complex, and providing a template for telomeric DNA synthesis, is most likely TR and not TER1 as described previously. Interacts with the N-terminal part of TERT. Interacts with CBF5. Interacts with CTC1 and STN1. Does not interact with TEN1. As to expression, expressed in roots, rosette leaves, cauline leaves, stems and flowers.

Its subcellular location is the nucleus. The protein resides in the chromosome. The protein localises to the telomere. It is found in the nucleolus. It localises to the cytoplasm. Its function is as follows. Component of the telomerase ribonucleoprotein (RNP) complex that is essential for the positive regulation of telomere length. Binds RNA non-specifically. Binds specifically single-stranded telomeric DNA. Not required to recruit telomerase to telomeres, but stimulates TER1 RNP repeat addition processivity. This Arabidopsis thaliana (Mouse-ear cress) protein is Protection of telomeres protein 1a.